Consider the following 232-residue polypeptide: Uracil-DNA glycosylase (232 aa).

Asp66 acts as the Proton acceptor in catalysis.

Belongs to the uracil-DNA glycosylase (UDG) superfamily. UNG family.

It localises to the cytoplasm. The catalysed reaction is Hydrolyzes single-stranded DNA or mismatched double-stranded DNA and polynucleotides, releasing free uracil.. Excises uracil residues from the DNA which can arise as a result of misincorporation of dUMP residues by DNA polymerase or due to deamination of cytosine. The chain is Uracil-DNA glycosylase from Lactobacillus helveticus (strain DPC 4571).